The sequence spans 416 residues: Serine hydroxymethyltransferase (416 aa).

(6S)-5,6,7,8-tetrahydrofolate-binding positions include leucine 121 and 125-127 (GHL). Lysine 229 bears the N6-(pyridoxal phosphate)lysine mark.

Belongs to the SHMT family. Homodimer. Pyridoxal 5'-phosphate serves as cofactor.

It is found in the cytoplasm. The catalysed reaction is (6R)-5,10-methylene-5,6,7,8-tetrahydrofolate + glycine + H2O = (6S)-5,6,7,8-tetrahydrofolate + L-serine. It participates in one-carbon metabolism; tetrahydrofolate interconversion. Its pathway is amino-acid biosynthesis; glycine biosynthesis; glycine from L-serine: step 1/1. Catalyzes the reversible interconversion of serine and glycine with tetrahydrofolate (THF) serving as the one-carbon carrier. This reaction serves as the major source of one-carbon groups required for the biosynthesis of purines, thymidylate, methionine, and other important biomolecules. Also exhibits THF-independent aldolase activity toward beta-hydroxyamino acids, producing glycine and aldehydes, via a retro-aldol mechanism. The chain is Serine hydroxymethyltransferase from Neisseria gonorrhoeae (strain ATCC 700825 / FA 1090).